We begin with the raw amino-acid sequence, 246 residues long: 1-(5-phosphoribosyl)-5-[(5-phosphoribosylamino)methylideneamino] imidazole-4-carboxamide isomerase (246 aa).

The active-site Proton acceptor is Asp-10.

Belongs to the HisA/HisF family.

The protein localises to the cytoplasm. It carries out the reaction 1-(5-phospho-beta-D-ribosyl)-5-[(5-phospho-beta-D-ribosylamino)methylideneamino]imidazole-4-carboxamide = 5-[(5-phospho-1-deoxy-D-ribulos-1-ylimino)methylamino]-1-(5-phospho-beta-D-ribosyl)imidazole-4-carboxamide. The protein operates within amino-acid biosynthesis; L-histidine biosynthesis; L-histidine from 5-phospho-alpha-D-ribose 1-diphosphate: step 4/9. The protein is 1-(5-phosphoribosyl)-5-[(5-phosphoribosylamino)methylideneamino] imidazole-4-carboxamide isomerase of Corynebacterium efficiens (strain DSM 44549 / YS-314 / AJ 12310 / JCM 11189 / NBRC 100395).